The sequence spans 109 residues: MSISQVIDTSFHEEVINSRQPVLVDFWAPWCGPCRMIASTIDEIAHDYKDKLKVVKVNTDQNPTIATEYGIRSIPTVMIFINGKKVDTVVGAVPKLTLLNTLQKHLKST.

The Thioredoxin domain maps to 2–107 (SISQVIDTSF…LLNTLQKHLK (106 aa)). Residues Cys-31 and Cys-34 each act as nucleophile in the active site. Cysteines 31 and 34 form a disulfide.

Belongs to the thioredoxin family.

The protein localises to the plastid. It localises to the chloroplast. In terms of biological role, participates in various redox reactions through the reversible oxidation of its active center dithiol to a disulfide and catalyzes dithiol-disulfide exchange reactions. In Griffithsia pacifica (Red alga), this protein is Thioredoxin (trxA).